We begin with the raw amino-acid sequence, 537 residues long: Cytochrome P450 86A8 (537 aa).

A helical membrane pass occupies residues 3–23; sequence ISTALMILSAITAYFLWLTFI. Heme is bound at residue Cys-458.

This sequence belongs to the cytochrome P450 family. Heme serves as cofactor. In terms of tissue distribution, expressed in leaves, stems, flowers and siliques. Expressed at low levels in roots.

It localises to the membrane. It catalyses the reaction an organic molecule + reduced [NADPH--hemoprotein reductase] + O2 = an alcohol + oxidized [NADPH--hemoprotein reductase] + H2O + H(+). Its function is as follows. Catalyzes the omega-hydroxylation of various fatty acids (FA). Acts on saturated and unsaturated fatty acids with chain lengths from C12 to C18. May be involved in the biosynthesis of cutin in the epidermis which prevents post-genital organ fusions. Hydroxylated FAs may be important for trichome differentiation, establishment of apical dominance and senescence. This is Cytochrome P450 86A8 (CYP86A8) from Arabidopsis thaliana (Mouse-ear cress).